We begin with the raw amino-acid sequence, 84 residues long: MNDKTQHFSFDDAMEKKVKEILSEVYSALKEKGYNPIAQLVGYLISGDPTYITNHKNARSIIRRIERDEILEEIVKFYIDHNIE.

Belongs to the UPF0297 family.

The polypeptide is UPF0297 protein Csac_1773 (Caldicellulosiruptor saccharolyticus (strain ATCC 43494 / DSM 8903 / Tp8T 6331)).